A 506-amino-acid polypeptide reads, in one-letter code: Histidine ammonia-lyase (506 aa).

Residues 143–145 (ASG) constitute a cross-link (5-imidazolinone (Ala-Gly)). At Ser-144 the chain carries 2,3-didehydroalanine (Ser).

This sequence belongs to the PAL/histidase family. In terms of processing, contains an active site 4-methylidene-imidazol-5-one (MIO), which is formed autocatalytically by cyclization and dehydration of residues Ala-Ser-Gly.

It localises to the cytoplasm. It carries out the reaction L-histidine = trans-urocanate + NH4(+). It participates in amino-acid degradation; L-histidine degradation into L-glutamate; N-formimidoyl-L-glutamate from L-histidine: step 1/3. This chain is Histidine ammonia-lyase, found in Salmonella schwarzengrund (strain CVM19633).